A 156-amino-acid chain; its full sequence is Small ribosomal subunit protein uS7 (156 aa).

It belongs to the universal ribosomal protein uS7 family. Part of the 30S ribosomal subunit. Contacts proteins S9 and S11.

Its function is as follows. One of the primary rRNA binding proteins, it binds directly to 16S rRNA where it nucleates assembly of the head domain of the 30S subunit. Is located at the subunit interface close to the decoding center, probably blocks exit of the E-site tRNA. This Campylobacter fetus subsp. fetus (strain 82-40) protein is Small ribosomal subunit protein uS7.